The chain runs to 290 residues: uncharacterized protein (290 aa).

This is an uncharacterized protein from Psittacid herpesvirus 1 (isolate Amazon parrot/-/97-0001/1997) (PsHV-1).